The primary structure comprises 345 residues: Annexin A9 (345 aa).

4 Annexin repeats span residues 41 to 112, 113 to 184, 197 to 266, and 270 to 341; these read FSVD…ALLQ, PAAQ…ALSK, NLEE…SLAS, and NTAL…ALCR.

Belongs to the annexin family. Homodimer.

In terms of biological role, may act as a low affinity receptor for acetylcholine. In Mus musculus (Mouse), this protein is Annexin A9 (Anxa9).